The primary structure comprises 200 residues: dITP/XTP pyrophosphatase (200 aa).

8–13 serves as a coordination point for substrate; sequence TGNQGK. The active-site Proton acceptor is D69. D69 provides a ligand contact to Mg(2+). Substrate contacts are provided by residues S70, 154–157, K177, and 182–183; these read FGYD and HR.

Belongs to the HAM1 NTPase family. Homodimer. Requires Mg(2+) as cofactor.

The catalysed reaction is XTP + H2O = XMP + diphosphate + H(+). It carries out the reaction dITP + H2O = dIMP + diphosphate + H(+). The enzyme catalyses ITP + H2O = IMP + diphosphate + H(+). Its function is as follows. Pyrophosphatase that catalyzes the hydrolysis of nucleoside triphosphates to their monophosphate derivatives, with a high preference for the non-canonical purine nucleotides XTP (xanthosine triphosphate), dITP (deoxyinosine triphosphate) and ITP. Seems to function as a house-cleaning enzyme that removes non-canonical purine nucleotides from the nucleotide pool, thus preventing their incorporation into DNA/RNA and avoiding chromosomal lesions. This Vibrio parahaemolyticus serotype O3:K6 (strain RIMD 2210633) protein is dITP/XTP pyrophosphatase.